A 294-amino-acid polypeptide reads, in one-letter code: UDP-3-O-acyl-N-acetylglucosamine deacetylase (294 aa).

Positions 75, 232, and 236 each coordinate Zn(2+). His259 serves as the catalytic Proton donor.

Belongs to the LpxC family. Zn(2+) is required as a cofactor.

It carries out the reaction a UDP-3-O-[(3R)-3-hydroxyacyl]-N-acetyl-alpha-D-glucosamine + H2O = a UDP-3-O-[(3R)-3-hydroxyacyl]-alpha-D-glucosamine + acetate. It participates in glycolipid biosynthesis; lipid IV(A) biosynthesis; lipid IV(A) from (3R)-3-hydroxytetradecanoyl-[acyl-carrier-protein] and UDP-N-acetyl-alpha-D-glucosamine: step 2/6. Catalyzes the hydrolysis of UDP-3-O-myristoyl-N-acetylglucosamine to form UDP-3-O-myristoylglucosamine and acetate, the committed step in lipid A biosynthesis. The chain is UDP-3-O-acyl-N-acetylglucosamine deacetylase from Campylobacter jejuni subsp. jejuni serotype O:2 (strain ATCC 700819 / NCTC 11168).